A 402-amino-acid chain; its full sequence is Pyridinium-3,5-bisthiocarboxylic acid mononucleotide nickel insertion protein (402 aa).

Belongs to the LarC family.

It carries out the reaction Ni(II)-pyridinium-3,5-bisthiocarboxylate mononucleotide = pyridinium-3,5-bisthiocarboxylate mononucleotide + Ni(2+). Functionally, involved in the biosynthesis of a nickel-pincer cofactor ((SCS)Ni(II) pincer complex). Binds Ni(2+), and functions in nickel delivery to pyridinium-3,5-bisthiocarboxylic acid mononucleotide (P2TMN), to form the mature cofactor. Is thus probably required for the activation of nickel-pincer cofactor-dependent enzymes. This chain is Pyridinium-3,5-bisthiocarboxylic acid mononucleotide nickel insertion protein, found in Desulfitobacterium hafniense (strain Y51).